We begin with the raw amino-acid sequence, 173 residues long: MVEKRNIFLIGPMGAGKSTIGRQLAQQLNMEFFDSDQEIERLTGADIGWVFDVEGEDGFRSREEKVINELTEKQGIVLATGGGSIKSRETRNRLSARGVVIYLDTTIEKQLVRTKRDKKRPLLQAKIPSREVLEALARERNPLYEEIADITIRANEQSAKVVAYHIISMLERN.

Residue 14–19 (GAGKST) coordinates ATP. Ser-18 serves as a coordination point for Mg(2+). Positions 36, 60, and 82 each coordinate substrate. Arg-120 provides a ligand contact to ATP. Substrate is bound at residue Arg-140. An ATP-binding site is contributed by Gln-157.

This sequence belongs to the shikimate kinase family. As to quaternary structure, monomer. The cofactor is Mg(2+).

It localises to the cytoplasm. It catalyses the reaction shikimate + ATP = 3-phosphoshikimate + ADP + H(+). Its pathway is metabolic intermediate biosynthesis; chorismate biosynthesis; chorismate from D-erythrose 4-phosphate and phosphoenolpyruvate: step 5/7. Functionally, catalyzes the specific phosphorylation of the 3-hydroxyl group of shikimic acid using ATP as a cosubstrate. The protein is Shikimate kinase of Baumannia cicadellinicola subsp. Homalodisca coagulata.